The following is a 307-amino-acid chain: Voltage-dependent anion channel-forming protein alr2987 (307 aa).

4 consecutive transmembrane segments (helical) span residues 19 to 39, 47 to 67, 209 to 229, and 238 to 258; these read VIGA…LVTL, VSQP…LLVF, PLAY…LLPF, and WTGL…AIGL.

This sequence belongs to the anion channel-forming bestrophin (TC 1.A.46) family.

The protein resides in the cell membrane. This chain is Voltage-dependent anion channel-forming protein alr2987, found in Nostoc sp. (strain PCC 7120 / SAG 25.82 / UTEX 2576).